The following is a 312-amino-acid chain: tRNA uridine(34) hydroxylase (312 aa).

Residues 147-237 (SDRNVIFIDM…GILGYVHDAN (91 aa)) form the Rhodanese domain. C201 functions as the Cysteine persulfide intermediate in the catalytic mechanism.

Belongs to the TrhO family.

It catalyses the reaction uridine(34) in tRNA + AH2 + O2 = 5-hydroxyuridine(34) in tRNA + A + H2O. Catalyzes oxygen-dependent 5-hydroxyuridine (ho5U) modification at position 34 in tRNAs. The protein is tRNA uridine(34) hydroxylase of Buchnera aphidicola subsp. Schizaphis graminum (strain Sg).